Reading from the N-terminus, the 133-residue chain is Small ribosomal subunit protein uS8 (133 aa).

Belongs to the universal ribosomal protein uS8 family. In terms of assembly, part of the 30S ribosomal subunit. Contacts proteins S5 and S12.

Its function is as follows. One of the primary rRNA binding proteins, it binds directly to 16S rRNA central domain where it helps coordinate assembly of the platform of the 30S subunit. The polypeptide is Small ribosomal subunit protein uS8 (Anaplasma phagocytophilum (strain HZ)).